Consider the following 941-residue polypeptide: Pre-mRNA-processing factor 6 (941 aa).

The disordered stretch occupies residues 1–79 (MNKKKKPFLG…DEDLNDTNYD (79 aa)). The span at 39 to 65 (DANDPVDDRHAPPGKRTVGDQMKKNQA) shows a compositional bias: basic and acidic residues. Positions 66–78 (ADDDDEDLNDTNY) are enriched in acidic residues. Position 143 is a phosphoserine (S143). 3 positions are modified to phosphothreonine: T180, T266, and T275. S279 carries the phosphoserine modification. HAT repeat units follow at residues 384–416 (TDIR…LEEP), 418–444 (DARI…ARLE), 445–476 (TYEN…LEEA), 554–586 (NALE…FEKN), 588–620 (GTRE…SKWL), 622–654 (GDVP…LESE), 689–721 (GNIT…IEEQ), 723–755 (ELME…LEEK), and 855–887 (RKIT…FELQ).

In terms of assembly, identified in the spliceosome B complex. Identified in the spliceosome C complex. Associates with the U5 snRNP particle. Component of the U4/U6-U5 tri-snRNP complex composed of the U4, U6 and U5 snRNAs and at least PRPF3, PRPF4, PRPF6, PRPF8, PRPF31, SNRNP200, TXNL4A, SNRNP40, DDX23, CD2BP2, PPIH, SNU13, EFTUD2, SART1 and USP39, LSm proteins LSm2-8 and Sm proteins. Interacts with ARAF1. Interacts with AR and NR3C1, but not ESR1, independently of the presence of hormones. Interacts with USH1G. Post-translationally, phosphorylated by PRP4K during spliceosome assembly.

It localises to the nucleus. The protein resides in the nucleoplasm. The protein localises to the nucleus speckle. Involved in pre-mRNA splicing as component of the U4/U6-U5 tri-snRNP complex, one of the building blocks of the spliceosome. Enhances dihydrotestosterone-induced transactivation activity of AR, as well as dexamethasone-induced transactivation activity of NR3C1, but does not affect estrogen-induced transactivation. The chain is Pre-mRNA-processing factor 6 (Prpf6) from Rattus norvegicus (Rat).